The primary structure comprises 925 residues: Ubp5-interacting protein ftp105 (925 aa).

Over residues 650-664 (EGSSDFESKSSDNTS) the composition is skewed to low complexity. Residues 650–671 (EGSSDFESKSSDNTSLDGTPLQ) are disordered.

It belongs to the hid-1 family. In terms of assembly, interacts with ubp5.

Its subcellular location is the cytoplasm. It is found in the golgi apparatus. Required for the localization of ubp5 to the Golgi apparatus. Involved in detoxification of cadmium ion. The polypeptide is Ubp5-interacting protein ftp105 (ftp105) (Schizosaccharomyces pombe (strain 972 / ATCC 24843) (Fission yeast)).